Here is a 348-residue protein sequence, read N- to C-terminus: Serpentine receptor class beta-7 (348 aa).

A run of 7 helical transmembrane segments spans residues 31–51 (QLIM…FQLL), 63–83 (LVGY…EAFI), 107–127 (GNLL…SITF), 145–165 (FLGP…ILLI), 191–211 (MFFI…FLLL), 241–261 (ISVI…TILL), and 280–300 (GAFM…SVYF).

The protein belongs to the nematode receptor-like protein srb family.

Its subcellular location is the membrane. The protein is Serpentine receptor class beta-7 (srb-7) of Caenorhabditis elegans.